We begin with the raw amino-acid sequence, 544 residues long: Chaperonin GroEL 4 (544 aa).

ATP is bound by residues 30-33 (TLGP), Lys51, 87-91 (DGTTT), Gly415, and Asp496.

This sequence belongs to the chaperonin (HSP60) family. In terms of assembly, forms a cylinder of 14 subunits composed of two heptameric rings stacked back-to-back. Interacts with the co-chaperonin GroES.

Its subcellular location is the cytoplasm. It catalyses the reaction ATP + H2O + a folded polypeptide = ADP + phosphate + an unfolded polypeptide.. Together with its co-chaperonin GroES, plays an essential role in assisting protein folding. The GroEL-GroES system forms a nano-cage that allows encapsulation of the non-native substrate proteins and provides a physical environment optimized to promote and accelerate protein folding. This Sinorhizobium medicae (strain WSM419) (Ensifer medicae) protein is Chaperonin GroEL 4.